Consider the following 169-residue polypeptide: AAQKRPSQRSKYLASASTMDHARHGFLPRHRDTGILDSLGRFFGSDRGAPKRGSGKDGHHAARTTHYGSLPQKAQGHRPQDENPVVHFFKNIVTPRTPPPSQGKGRGLSLSRFSWGAEGQKPGFGYGGRASDYKSAHKGLKGHDAQGTLSKIFKLGGRDSRSGSPMARR.

Alanine 1 carries the post-translational modification N-acetylalanine. The segment at 1 to 114 (AAQKRPSQRS…GRGLSLSRFS (114 aa)) is disordered. Residue serine 7 is modified to Phosphoserine; in C5 and C6. Serine 10 is subject to Phosphoserine. Tyrosine 12 bears the Phosphotyrosine mark. Residue serine 17 is modified to Phosphoserine. Threonine 18 is modified (phosphothreonine). Citrulline; in form C8b is present on arginine 23. Position 29 is a citrulline (arginine 29). Threonine 33 carries the phosphothreonine modification. Serine 38 carries the post-translational modification Phosphoserine. The residue at position 41 (arginine 41) is a Citrulline; alternate. The residue at position 41 (arginine 41) is an Omega-N-methylarginine; alternate. Residues 43-87 (FGSDRGAPKRGSGKDGHHAARTTHYGSLPQKAQGHRPQDENPVVH) are induces experimental autoimmune encephalomyelitis (EAE) 1. The residue at position 47 (arginine 47) is a Citrulline; in form C8b. Arginine 47 carries the post-translational modification Omega-N-methylarginine. Serine 54 is subject to Phosphoserine; in C4, C5 and C6. Residue arginine 63 is modified to Citrulline. Threonine 65 is modified (phosphothreonine). Residue tyrosine 67 is modified to Phosphotyrosine. Threonine 94 is subject to Phosphothreonine. Residue arginine 96 is modified to Citrulline; in form C2, C3, C8a and C8b. Phosphothreonine; by MAPK; in C3, C4, C5 and C6 is present on threonine 97. Position 102 is a deamidated glutamine; in form C5 (glutamine 102). Citrulline; alternate is present on arginine 106. Arginine 106 carries the omega-N-methylarginine; alternate modification. At arginine 106 the chain carries Symmetric dimethylarginine; alternate. Arginine 112 is subject to Citrulline. Serine 114 is modified (phosphoserine). The tract at residues 114–122 (SWGAEGQKP) is induces experimental autoimmune encephalomyelitis (EAE) 2. Glutamine 120 is modified (deamidated glutamine; in form C3). An N6-acetyllysine modification is found at lysine 121. Arginine 129 carries the citrulline modification. Residues 133 to 169 (YKSAHKGLKGHDAQGTLSKIFKLGGRDSRSGSPMARR) are disordered. Deamidated glutamine; in form C2 is present on glutamine 146. Arginine 158 is modified (citrulline). A Phosphoserine; in C4 and C6 modification is found at serine 160. Arginine 161 carries the post-translational modification Citrulline; in form C3. Serine 164 is modified (phosphoserine; in form C3, C5 and C6). Citrulline is present on residues arginine 168 and arginine 169.

The protein belongs to the myelin basic protein family. Homodimer; self-associates in the presence of lysolipid. Post-translationally, at least 6 charge isomers; C1 (the most cationic and least modified form), C2, C3, C4, C5 and C6 (the least cationic form); are produced as a result of optional post-translational modifications, such as phosphorylation of serine or threonine residues, deamidation of glutamine or asparagine residues, citrullination and methylation of arginine residues. Phosphorylated by TAOK2, VRK2, MAPK11, MAPK12, MAPK14 and MINK1. In terms of processing, proteolytically cleaved in B cell lysosomes by cathepsin CTSG which degrades the major immunogenic MBP epitope and prevents the activation of MBP-specific autoreactive T cells. Found in both the central and the peripheral nervous system.

The protein localises to the myelin membrane. In terms of biological role, is, with PLP, the most abundant protein component of the myelin membrane in the CNS. Has a role in both the formation and stabilization of this compact multilayer arrangement of bilayers. Each splice variant and charge isomer may have a specialized function in the assembly of an optimized, biochemically functional myelin membrane. The polypeptide is Myelin basic protein (MBP) (Bos taurus (Bovine)).